Here is a 559-residue protein sequence, read N- to C-terminus: Formate--tetrahydrofolate ligase (559 aa).

66–73 (TPPGEGKT) contributes to the ATP binding site.

Belongs to the formate--tetrahydrofolate ligase family.

The enzyme catalyses (6S)-5,6,7,8-tetrahydrofolate + formate + ATP = (6R)-10-formyltetrahydrofolate + ADP + phosphate. Its pathway is one-carbon metabolism; tetrahydrofolate interconversion. The protein is Formate--tetrahydrofolate ligase of Nocardioides sp. (strain ATCC BAA-499 / JS614).